A 364-amino-acid polypeptide reads, in one-letter code: Paraneoplastic antigen Ma2 homolog (364 aa).

Position 2 is an N-acetylalanine (A2). Acidic residues predominate over residues 335–353 (EEEEASFENESIEEPEEGD). Residues 335-364 (EEEEASFENESIEEPEEGDGYGGWNHEGDD) are disordered. Positions 354 to 364 (GYGGWNHEGDD) are enriched in gly residues.

Belongs to the PNMA family.

Its subcellular location is the nucleus. It is found in the nucleolus. This chain is Paraneoplastic antigen Ma2 homolog (PNMA2), found in Macaca fascicularis (Crab-eating macaque).